Consider the following 458-residue polypeptide: Exodeoxyribonuclease 7 large subunit (458 aa).

It belongs to the XseA family. Heterooligomer composed of large and small subunits.

The protein resides in the cytoplasm. It carries out the reaction Exonucleolytic cleavage in either 5'- to 3'- or 3'- to 5'-direction to yield nucleoside 5'-phosphates.. Functionally, bidirectionally degrades single-stranded DNA into large acid-insoluble oligonucleotides, which are then degraded further into small acid-soluble oligonucleotides. The chain is Exodeoxyribonuclease 7 large subunit from Stutzerimonas stutzeri (strain A1501) (Pseudomonas stutzeri).